The chain runs to 38 residues: Photosystem II reaction center protein L (38 aa).

Residues Ser17–Phe37 traverse the membrane as a helical segment.

Belongs to the PsbL family. As to quaternary structure, PSII is composed of 1 copy each of membrane proteins PsbA, PsbB, PsbC, PsbD, PsbE, PsbF, PsbH, PsbI, PsbJ, PsbK, PsbL, PsbM, PsbT, PsbX, PsbY, PsbZ, Psb30/Ycf12, at least 3 peripheral proteins of the oxygen-evolving complex and a large number of cofactors. It forms dimeric complexes.

It is found in the plastid. The protein localises to the chloroplast thylakoid membrane. Functionally, one of the components of the core complex of photosystem II (PSII). PSII is a light-driven water:plastoquinone oxidoreductase that uses light energy to abstract electrons from H(2)O, generating O(2) and a proton gradient subsequently used for ATP formation. It consists of a core antenna complex that captures photons, and an electron transfer chain that converts photonic excitation into a charge separation. This subunit is found at the monomer-monomer interface and is required for correct PSII assembly and/or dimerization. The polypeptide is Photosystem II reaction center protein L (Nephroselmis olivacea (Green alga)).